A 40-amino-acid polypeptide reads, in one-letter code: Photosystem II reaction center protein J (40 aa).

Residues 8-28 (IPLWIIGTVAGIVVIGLIGLF) form a helical membrane-spanning segment.

Belongs to the PsbJ family. As to quaternary structure, PSII is composed of 1 copy each of membrane proteins PsbA, PsbB, PsbC, PsbD, PsbE, PsbF, PsbH, PsbI, PsbJ, PsbK, PsbL, PsbM, PsbT, PsbX, PsbY, PsbZ, Psb30/Ycf12, at least 3 peripheral proteins of the oxygen-evolving complex and a large number of cofactors. It forms dimeric complexes.

Its subcellular location is the plastid. It localises to the chloroplast thylakoid membrane. One of the components of the core complex of photosystem II (PSII). PSII is a light-driven water:plastoquinone oxidoreductase that uses light energy to abstract electrons from H(2)O, generating O(2) and a proton gradient subsequently used for ATP formation. It consists of a core antenna complex that captures photons, and an electron transfer chain that converts photonic excitation into a charge separation. In Pisum sativum (Garden pea), this protein is Photosystem II reaction center protein J.